The following is a 406-amino-acid chain: DNA primase DnaG (406 aa).

The Toprim domain occupies 169–247 (PNLIIVEGRA…KIDFVARAPI (79 aa)). Residues E175, D220, and D222 each coordinate Mg(2+).

This sequence belongs to the archaeal DnaG primase family. In terms of assembly, forms a ternary complex with MCM helicase and DNA. Component of the archaeal exosome complex. Interacts with Csl4 but not with Rrp4. The cofactor is Mg(2+).

It carries out the reaction ssDNA + n NTP = ssDNA/pppN(pN)n-1 hybrid + (n-1) diphosphate.. Functionally, RNA polymerase that catalyzes the synthesis of short RNA molecules used as primers for DNA polymerase during DNA replication. Can use NTPs but not dNTPs. Binds DNA. Also part of the exosome, which is a complex involved in RNA degradation. Acts as a poly(A)-binding protein that enhances the interaction between heteromeric, adenine-rich transcripts and the exosome. This Saccharolobus solfataricus (strain ATCC 35092 / DSM 1617 / JCM 11322 / P2) (Sulfolobus solfataricus) protein is DNA primase DnaG.